Reading from the N-terminus, the 244-residue chain is tRNA (guanine-N(1)-)-methyltransferase (244 aa).

Residues Gly-112 and 131–136 each bind S-adenosyl-L-methionine; that span reads IGDFIV.

It belongs to the RNA methyltransferase TrmD family. As to quaternary structure, homodimer.

The protein resides in the cytoplasm. It catalyses the reaction guanosine(37) in tRNA + S-adenosyl-L-methionine = N(1)-methylguanosine(37) in tRNA + S-adenosyl-L-homocysteine + H(+). Its function is as follows. Specifically methylates guanosine-37 in various tRNAs. In Clostridium kluyveri (strain NBRC 12016), this protein is tRNA (guanine-N(1)-)-methyltransferase.